Here is a 503-residue protein sequence, read N- to C-terminus: Na(+)-translocating NADH-quinone reductase subunit B (503 aa).

The next 4 helical transmembrane spans lie at 55-75, 120-140, 161-181, and 186-206; these read MMLVVIALFPATFLAIWNSGI, IFLPLLIISYTVGGACEVLFA, TLPPTIPYWMAALGIAFGVVV, and FGGTGMNILNPALSGRAFLFF. Threonine 248 carries the FMN phosphoryl threonine modification. 5 helical membrane passes run 361–381, 387–407, 417–437, 452–472, and 475–495; these read TSTFACLLGAVFLVITGIASW, FGIGAFVTAWLFKICSILIAG, FFIPAYRQLFLGGLAFGLVFM, WIYGLFIGFMTIIIRLINPAY, and GVMLAILLGNVFAPLLDYFAV.

This sequence belongs to the NqrB/RnfD family. Composed of six subunits; NqrA, NqrB, NqrC, NqrD, NqrE and NqrF. FMN is required as a cofactor.

It localises to the cell inner membrane. It carries out the reaction a ubiquinone + n Na(+)(in) + NADH + H(+) = a ubiquinol + n Na(+)(out) + NAD(+). NQR complex catalyzes the reduction of ubiquinone-1 to ubiquinol by two successive reactions, coupled with the transport of Na(+) ions from the cytoplasm to the periplasm. NqrA to NqrE are probably involved in the second step, the conversion of ubisemiquinone to ubiquinol. The chain is Na(+)-translocating NADH-quinone reductase subunit B from Chlamydia abortus (strain DSM 27085 / S26/3) (Chlamydophila abortus).